Reading from the N-terminus, the 162-residue chain is UPF0305 protein MMP0665 (162 aa).

The protein belongs to the UPF0305 family.

In Methanococcus maripaludis (strain DSM 14266 / JCM 13030 / NBRC 101832 / S2 / LL), this protein is UPF0305 protein MMP0665.